Reading from the N-terminus, the 447-residue chain is Argininosuccinate synthase (447 aa).

ATP is bound by residues 17–25 (AFSGGLDTS) and Ala43. An L-citrulline-binding site is contributed by Tyr99. ATP-binding residues include Gly129 and Thr131. The L-aspartate site is built by Thr131, Asn135, and Asp136. Asn135 lines the L-citrulline pocket. Asp136 contacts ATP. Residues Arg139 and Ser192 each coordinate L-citrulline. Asp194 serves as a coordination point for ATP. L-citrulline contacts are provided by Thr201, Glu203, and Glu280.

The protein belongs to the argininosuccinate synthase family. Type 2 subfamily. As to quaternary structure, homotetramer.

It localises to the cytoplasm. It catalyses the reaction L-citrulline + L-aspartate + ATP = 2-(N(omega)-L-arginino)succinate + AMP + diphosphate + H(+). Its pathway is amino-acid biosynthesis; L-arginine biosynthesis; L-arginine from L-ornithine and carbamoyl phosphate: step 2/3. This chain is Argininosuccinate synthase, found in Salmonella dublin (strain CT_02021853).